We begin with the raw amino-acid sequence, 545 residues long: Chromosomal replication initiator protein DnaA (545 aa).

The domain I, interacts with DnaA modulators stretch occupies residues 1-72 (MNDFWQHCSA…DMARDFWQAP (72 aa)). Residues 72-208 (PVDVQFVLDP…GETDSMYERS (137 aa)) are domain II. A compositionally biased stretch (low complexity) spans 90 to 105 (AAAPAPASARPASAPG). Disordered stretches follow at residues 90–112 (AAAPAPASARPASAPGSMGGSAG) and 181–204 (AAARRTWRPGQSASSNGNGETDSM). The span at 189–201 (PGQSASSNGNGET) shows a compositional bias: polar residues. Residues 209–425 (KLNPVLTFDN…GALRKILAYS (217 aa)) are domain III, AAA+ region. Glycine 253, glycine 255, lysine 256, and threonine 257 together coordinate ATP. Residues 426 to 545 (KFHGREITIE…LHVLEQTLKG (120 aa)) form a domain IV, binds dsDNA region.

Belongs to the DnaA family. Oligomerizes as a right-handed, spiral filament on DNA at oriC.

It is found in the cytoplasm. Plays an essential role in the initiation and regulation of chromosomal replication. ATP-DnaA binds to the origin of replication (oriC) to initiate formation of the DNA replication initiation complex once per cell cycle. Binds the DnaA box (a 9 base pair repeat at the origin) and separates the double-stranded (ds)DNA. Forms a right-handed helical filament on oriC DNA; dsDNA binds to the exterior of the filament while single-stranded (ss)DNA is stabiized in the filament's interior. The ATP-DnaA-oriC complex binds and stabilizes one strand of the AT-rich DNA unwinding element (DUE), permitting loading of DNA polymerase. After initiation quickly degrades to an ADP-DnaA complex that is not apt for DNA replication. Binds acidic phospholipids. The sequence is that of Chromosomal replication initiator protein DnaA from Paraburkholderia phytofirmans (strain DSM 17436 / LMG 22146 / PsJN) (Burkholderia phytofirmans).